A 271-amino-acid polypeptide reads, in one-letter code: Formamidopyrimidine-DNA glycosylase (271 aa).

Residue Pro2 is the Schiff-base intermediate with DNA of the active site. The active-site Proton donor is the Glu3. Lys57 functions as the Proton donor; for beta-elimination activity in the catalytic mechanism. DNA is bound by residues His90, Arg109, and Lys151. The FPG-type zinc finger occupies 236-270 (HVYGRGGETCTECGHLLSEIRLGQRTTVFCSLCQT). Arg260 serves as the catalytic Proton donor; for delta-elimination activity.

Belongs to the FPG family. Monomer. Zn(2+) is required as a cofactor.

The catalysed reaction is Hydrolysis of DNA containing ring-opened 7-methylguanine residues, releasing 2,6-diamino-4-hydroxy-5-(N-methyl)formamidopyrimidine.. It carries out the reaction 2'-deoxyribonucleotide-(2'-deoxyribose 5'-phosphate)-2'-deoxyribonucleotide-DNA = a 3'-end 2'-deoxyribonucleotide-(2,3-dehydro-2,3-deoxyribose 5'-phosphate)-DNA + a 5'-end 5'-phospho-2'-deoxyribonucleoside-DNA + H(+). Involved in base excision repair of DNA damaged by oxidation or by mutagenic agents. Acts as a DNA glycosylase that recognizes and removes damaged bases. Has a preference for oxidized purines, such as 7,8-dihydro-8-oxoguanine (8-oxoG). Has AP (apurinic/apyrimidinic) lyase activity and introduces nicks in the DNA strand. Cleaves the DNA backbone by beta-delta elimination to generate a single-strand break at the site of the removed base with both 3'- and 5'-phosphates. In Shewanella amazonensis (strain ATCC BAA-1098 / SB2B), this protein is Formamidopyrimidine-DNA glycosylase.